A 262-amino-acid polypeptide reads, in one-letter code: 4-hydroxy-2-oxovalerate aldolase (262 aa).

The active-site Proton acceptor is the H48. Residue Q149 participates in substrate binding. E151 provides a ligand contact to Mg(2+). The substrate site is built by A176 and D177. Mg(2+) is bound at residue D177.

This sequence belongs to the HpcH/HpaI aldolase family.

It catalyses the reaction (S)-4-hydroxy-2-oxopentanoate = acetaldehyde + pyruvate. It functions in the pathway xenobiotic degradation; biphenyl degradation. Catalyzes the reversible retro-aldol cleavage of 4-hydroxy-2-oxovalerate to pyruvate and acetaldehyde. The polypeptide is 4-hydroxy-2-oxovalerate aldolase (bphF) (Novosphingobium aromaticivorans (Sphingomonas aromaticivorans)).